Consider the following 231-residue polypeptide: MTEVTNSLPTSGLLNEANDEFLGLTLALSKGRILEETMPLLRAAGVELLEDPEASRKLIFPTSNPNVRVLILRASDVPTYVEHGAADFGVAGKDVLLEHGANHVYELLDLKIAQCKLMTAGVKDAPLPNRRLRIATKYVNVARAYFASQGQQVDVIKLYGSMELAPLVGLGDLIVDVVDTGNTLRANGLEARDHICDVSSRLIVNQVSYKRKFALLEPILDSFKNSINSTS.

Belongs to the ATP phosphoribosyltransferase family. Short subfamily. Heteromultimer composed of HisG and HisZ subunits.

The protein localises to the cytoplasm. The catalysed reaction is 1-(5-phospho-beta-D-ribosyl)-ATP + diphosphate = 5-phospho-alpha-D-ribose 1-diphosphate + ATP. Its pathway is amino-acid biosynthesis; L-histidine biosynthesis; L-histidine from 5-phospho-alpha-D-ribose 1-diphosphate: step 1/9. Catalyzes the condensation of ATP and 5-phosphoribose 1-diphosphate to form N'-(5'-phosphoribosyl)-ATP (PR-ATP). Has a crucial role in the pathway because the rate of histidine biosynthesis seems to be controlled primarily by regulation of HisG enzymatic activity. The polypeptide is ATP phosphoribosyltransferase (Psychrobacter arcticus (strain DSM 17307 / VKM B-2377 / 273-4)).